We begin with the raw amino-acid sequence, 276 residues long: Glutamate racemase (276 aa).

Substrate contacts are provided by residues 10–11 (DS) and 42–43 (YG). Catalysis depends on Cys74, which acts as the Proton donor/acceptor. Position 75-76 (75-76 (NT)) interacts with substrate. Catalysis depends on Cys185, which acts as the Proton donor/acceptor. 186–187 (TH) is a substrate binding site.

It belongs to the aspartate/glutamate racemases family.

It catalyses the reaction L-glutamate = D-glutamate. It participates in cell wall biogenesis; peptidoglycan biosynthesis. Provides the (R)-glutamate required for cell wall biosynthesis. The sequence is that of Glutamate racemase from Levilactobacillus brevis (Lactobacillus brevis).